The chain runs to 379 residues: Cytochrome b (379 aa).

The next 4 membrane-spanning stretches (helical) occupy residues 33-53 (FGSLLGACLTIQIITGLFLAM), 77-98 (WTIRYLHANGASMFFLCLFIHV), 113-133 (WNVGITLLFSVMATAFMGYVL), and 178-198 (FFALHFILPFITSALVMIHLL). 2 residues coordinate heme b: histidine 83 and histidine 97. Heme b contacts are provided by histidine 182 and histidine 196. Histidine 201 serves as a coordination point for a ubiquinone. A run of 4 helical transmembrane segments spans residues 226–246 (TKDFLGLLLLILLLMTMALFY), 288–308 (LGGVMALILSILILVMFPFLQ), 320–340 (LSQFLFWILVADLLTLTWIGG), and 347–367 (FINIGQMASMLYFSLMIFIMP).

The protein belongs to the cytochrome b family. In terms of assembly, the cytochrome bc1 complex contains 11 subunits: 3 respiratory subunits (MT-CYB, CYC1 and UQCRFS1), 2 core proteins (UQCRC1 and UQCRC2) and 6 low-molecular weight proteins (UQCRH/QCR6, UQCRB/QCR7, UQCRQ/QCR8, UQCR10/QCR9, UQCR11/QCR10 and a cleavage product of UQCRFS1). This cytochrome bc1 complex then forms a dimer. Requires heme b as cofactor.

Its subcellular location is the mitochondrion inner membrane. Component of the ubiquinol-cytochrome c reductase complex (complex III or cytochrome b-c1 complex) that is part of the mitochondrial respiratory chain. The b-c1 complex mediates electron transfer from ubiquinol to cytochrome c. Contributes to the generation of a proton gradient across the mitochondrial membrane that is then used for ATP synthesis. In Lepilemur sahamalazensis (Sahamalaza sportive lemur), this protein is Cytochrome b (MT-CYB).